The chain runs to 511 residues: 2-isopropylmalate synthase (511 aa).

In terms of domain architecture, Pyruvate carboxyltransferase spans 6-269 (IIIFDTTLRD…YTDIKCENIS (264 aa)). Positions 15, 203, 205, and 239 each coordinate Mn(2+). The interval 394–511 (VLEKLSVISG…SLKVEERKMA (118 aa)) is regulatory domain.

Belongs to the alpha-IPM synthase/homocitrate synthase family. LeuA type 1 subfamily. In terms of assembly, homodimer. Mn(2+) serves as cofactor.

The protein resides in the cytoplasm. The enzyme catalyses 3-methyl-2-oxobutanoate + acetyl-CoA + H2O = (2S)-2-isopropylmalate + CoA + H(+). It functions in the pathway amino-acid biosynthesis; L-leucine biosynthesis; L-leucine from 3-methyl-2-oxobutanoate: step 1/4. In terms of biological role, catalyzes the condensation of the acetyl group of acetyl-CoA with 3-methyl-2-oxobutanoate (2-ketoisovalerate) to form 3-carboxy-3-hydroxy-4-methylpentanoate (2-isopropylmalate). The sequence is that of 2-isopropylmalate synthase from Campylobacter jejuni subsp. doylei (strain ATCC BAA-1458 / RM4099 / 269.97).